A 131-amino-acid chain; its full sequence is Small ribosomal subunit protein uS11 (131 aa).

Residues 1–15 show a composition bias toward basic residues; the sequence is MAAQKVKKTRRRKER. Residues 1–23 form a disordered region; it reads MAAQKVKKTRRRKERKNVEHGAA.

This sequence belongs to the universal ribosomal protein uS11 family. In terms of assembly, part of the 30S ribosomal subunit. Interacts with proteins S7 and S18. Binds to IF-3.

Functionally, located on the platform of the 30S subunit, it bridges several disparate RNA helices of the 16S rRNA. Forms part of the Shine-Dalgarno cleft in the 70S ribosome. The sequence is that of Small ribosomal subunit protein uS11 from Clostridium perfringens (strain 13 / Type A).